The chain runs to 412 residues: Multifunctional CCA protein (412 aa).

Glycine 8 and arginine 11 together coordinate ATP. 2 residues coordinate CTP: glycine 8 and arginine 11. Residues glutamate 21 and aspartate 23 each coordinate Mg(2+). Positions 91, 137, and 140 each coordinate ATP. Residues arginine 91, arginine 137, and arginine 140 each coordinate CTP. Residues 228–329 (TGIHTLMTLA…LKLFNAIDVW (102 aa)) enclose the HD domain.

Belongs to the tRNA nucleotidyltransferase/poly(A) polymerase family. Bacterial CCA-adding enzyme type 1 subfamily. Monomer. Can also form homodimers and oligomers. Mg(2+) is required as a cofactor. It depends on Ni(2+) as a cofactor.

It carries out the reaction a tRNA precursor + 2 CTP + ATP = a tRNA with a 3' CCA end + 3 diphosphate. It catalyses the reaction a tRNA with a 3' CCA end + 2 CTP + ATP = a tRNA with a 3' CCACCA end + 3 diphosphate. Its function is as follows. Catalyzes the addition and repair of the essential 3'-terminal CCA sequence in tRNAs without using a nucleic acid template. Adds these three nucleotides in the order of C, C, and A to the tRNA nucleotide-73, using CTP and ATP as substrates and producing inorganic pyrophosphate. tRNA 3'-terminal CCA addition is required both for tRNA processing and repair. Also involved in tRNA surveillance by mediating tandem CCA addition to generate a CCACCA at the 3' terminus of unstable tRNAs. While stable tRNAs receive only 3'-terminal CCA, unstable tRNAs are marked with CCACCA and rapidly degraded. The protein is Multifunctional CCA protein of Yersinia pseudotuberculosis serotype I (strain IP32953).